Consider the following 371-residue polypeptide: Aurora kinase (371 aa).

Polar residues-rich tracts occupy residues 1-15 and 48-80; these read MSMK…SVSL and RIST…YTTD. The interval 1-84 is disordered; that stretch reads MSMKQLETSM…SSYTTDPPSP (84 aa). A Protein kinase domain is found at 99 to 350; the sequence is FEIGKALGKG…LKDMHKHPWI (252 aa). ATP contacts are provided by residues 105 to 113 and Lys128; that span reads LGKGKFGKV. Asp222 functions as the Proton acceptor in the catalytic mechanism.

This sequence belongs to the protein kinase superfamily. Ser/Thr protein kinase family. Aurora subfamily.

The protein localises to the nucleus. It is found in the cytoplasm. It localises to the cytoskeleton. The protein resides in the spindle. Its subcellular location is the chromosome. The protein localises to the centromere. It is found in the kinetochore. The catalysed reaction is L-seryl-[protein] + ATP = O-phospho-L-seryl-[protein] + ADP + H(+). It carries out the reaction L-threonyl-[protein] + ATP = O-phospho-L-threonyl-[protein] + ADP + H(+). In terms of biological role, component of the chromosomal passenger complex (CPC), a complex that acts as a key regulator of chromosome segregation and cytokinesis. Has a role in error-correction of aberrent kinetochore-microtubule attachments to ensure that sister kinetochores become bioriented and connect to opposite poles by promoting spindle assembly checkpoint signaling. The polypeptide is Aurora kinase (IPL1) (Yarrowia lipolytica (strain CLIB 122 / E 150) (Yeast)).